Consider the following 438-residue polypeptide: Choline monooxygenase, chloroplastic (438 aa).

Residues 1 to 58 (MAASATTMLLKYPTTVCGIPNSSANNSTDPSNNIVQIPQTTTTNSPLLKFRTPNKPVN) constitute a chloroplast transit peptide. In terms of domain architecture, Rieske spans 121–228 (WQVAGYSDQV…VAVWGPFILI (108 aa)). 4 residues coordinate [2Fe-2S] cluster: Cys163, His165, Cys182, and His185. Fe cation-binding residues include His288 and His293.

It belongs to the choline monooxygenase family. Requires [2Fe-2S] cluster as cofactor. It depends on Fe cation as a cofactor. Mg(2+) serves as cofactor. In terms of tissue distribution, expressed in roots and leaves.

The protein localises to the plastid. Its subcellular location is the chloroplast stroma. It carries out the reaction choline + 2 reduced [2Fe-2S]-[ferredoxin] + O2 + 2 H(+) = betaine aldehyde hydrate + 2 oxidized [2Fe-2S]-[ferredoxin] + H2O. It functions in the pathway amine and polyamine biosynthesis; betaine biosynthesis via choline pathway; betaine aldehyde from choline (monooxygenase route): step 1/1. In terms of biological role, catalyzes the first step of the osmoprotectant glycine betaine synthesis. In Atriplex hortensis (Mountain spinach), this protein is Choline monooxygenase, chloroplastic (CMO).